Reading from the N-terminus, the 204-residue chain is FMN-dependent NADH:quinone oxidoreductase (204 aa).

Residues S9, 15–17 (SVS), 95–98 (MYNF), and 139–142 (SRGG) each bind FMN.

The protein belongs to the azoreductase type 1 family. In terms of assembly, homodimer. It depends on FMN as a cofactor.

The enzyme catalyses 2 a quinone + NADH + H(+) = 2 a 1,4-benzosemiquinone + NAD(+). It carries out the reaction N,N-dimethyl-1,4-phenylenediamine + anthranilate + 2 NAD(+) = 2-(4-dimethylaminophenyl)diazenylbenzoate + 2 NADH + 2 H(+). Its function is as follows. Quinone reductase that provides resistance to thiol-specific stress caused by electrophilic quinones. Also exhibits azoreductase activity. Catalyzes the reductive cleavage of the azo bond in aromatic azo compounds to the corresponding amines. The chain is FMN-dependent NADH:quinone oxidoreductase from Methylocella silvestris (strain DSM 15510 / CIP 108128 / LMG 27833 / NCIMB 13906 / BL2).